The primary structure comprises 128 residues: Holo-[acyl-carrier-protein] synthase (128 aa).

2 residues coordinate Mg(2+): Asp-8 and Glu-60.

This sequence belongs to the P-Pant transferase superfamily. AcpS family. Requires Mg(2+) as cofactor.

It localises to the cytoplasm. The enzyme catalyses apo-[ACP] + CoA = holo-[ACP] + adenosine 3',5'-bisphosphate + H(+). In terms of biological role, transfers the 4'-phosphopantetheine moiety from coenzyme A to a Ser of acyl-carrier-protein. The protein is Holo-[acyl-carrier-protein] synthase of Anaeromyxobacter dehalogenans (strain 2CP-1 / ATCC BAA-258).